Here is a 130-residue protein sequence, read N- to C-terminus: Small ribosomal subunit protein uS8 (130 aa).

It belongs to the universal ribosomal protein uS8 family. In terms of assembly, part of the 30S ribosomal subunit.

In terms of biological role, one of the primary rRNA binding proteins, it binds directly to 16S rRNA central domain where it helps coordinate assembly of the platform of the 30S subunit. This is Small ribosomal subunit protein uS8 from Cenarchaeum symbiosum (strain A).